The primary structure comprises 552 residues: Rhodopsin kinase GRK7 (552 aa).

Residue Ser36 is modified to Phosphoserine; by PKA. Residues 56–176 form the RGS domain; it reads FHSLCEQQPI…LASPFYDKFL (121 aa). The Protein kinase domain occupies 191–454; that stretch reads FEEFRVLGKG…SDDPRKHHFF (264 aa). ATP contacts are provided by residues 197–205 and Lys220; that span reads LGKGGFGEV. Residue Asp316 is the Proton acceptor of the active site. Residues 455-520 form the AGC-kinase C-terminal domain; sequence KTINFPRLEA…GAVPIAWQEE (66 aa). Cys549 is modified (cysteine methyl ester). Residue Cys549 is the site of S-geranylgeranyl cysteine attachment. Residues 550 to 552 constitute a propeptide, removed in mature form; that stretch reads LLL.

Belongs to the protein kinase superfamily. AGC Ser/Thr protein kinase family. GPRK subfamily. In terms of assembly, interacts (when prenylated) with PDE6D; this promotes release from membranes. Autophosphorylated in vitro at Ser-490. Phosphorylation at Ser-36 is regulated by light and activated by cAMP.

The protein resides in the membrane. It catalyses the reaction L-threonyl-[rhodopsin] + ATP = O-phospho-L-threonyl-[rhodopsin] + ADP + H(+). It carries out the reaction L-seryl-[rhodopsin] + ATP = O-phospho-L-seryl-[rhodopsin] + ADP + H(+). Inhibited by phosphorylation of Ser-36. In terms of biological role, retina-specific kinase involved in the shutoff of the photoresponse and adaptation to changing light conditions via cone opsin phosphorylation, including rhodopsin (RHO). This chain is Rhodopsin kinase GRK7 (GRK7), found in Bos taurus (Bovine).